The primary structure comprises 35 residues: Photosystem II reaction center protein T (35 aa).

A helical transmembrane segment spans residues 3 to 23; sequence AFAYTLLMTLVVATLFFAVAF.

Belongs to the PsbT family. PSII is composed of 1 copy each of membrane proteins PsbA, PsbB, PsbC, PsbD, PsbE, PsbF, PsbH, PsbI, PsbJ, PsbK, PsbL, PsbM, PsbT, PsbX, PsbY, Psb30/Ycf12, peripheral proteins PsbO, CyanoQ (PsbQ), PsbU, PsbV and a large number of cofactors. It forms dimeric complexes.

Its subcellular location is the cellular thylakoid membrane. Found at the monomer-monomer interface of the photosystem II (PS II) dimer, plays a role in assembly and dimerization of PSII. PSII is a light-driven water plastoquinone oxidoreductase, using light energy to abstract electrons from H(2)O, generating a proton gradient subsequently used for ATP formation. This Prochlorococcus marinus (strain MIT 9303) protein is Photosystem II reaction center protein T.